Consider the following 398-residue polypeptide: uncharacterized protein (398 aa).

An N-terminal signal peptide occupies residues M1–G21. An N-acetylcysteine modification is found at C22. C22 is lipidated: S-archaeol cysteine.

This sequence belongs to the BMP lipoprotein family.

The protein resides in the cell membrane. This is an uncharacterized protein from Pyrococcus furiosus (strain ATCC 43587 / DSM 3638 / JCM 8422 / Vc1).